A 218-amino-acid chain; its full sequence is Small ribosomal subunit protein uS3 (218 aa).

Positions 38 to 106 (IREFISKRLS…RVHINILEIK (69 aa)) constitute a KH type-2 domain.

Belongs to the universal ribosomal protein uS3 family. In terms of assembly, part of the 30S ribosomal subunit. Forms a tight complex with proteins S10 and S14.

Functionally, binds the lower part of the 30S subunit head. Binds mRNA in the 70S ribosome, positioning it for translation. The sequence is that of Small ribosomal subunit protein uS3 from Bacillus pumilus (strain SAFR-032).